The primary structure comprises 238 residues: Ribonuclease 3 (238 aa).

Residues 11–136 (RARLEAAIGY…LIAAIYLDGG (126 aa)) enclose the RNase III domain. Position 49 (Glu49) interacts with Mg(2+). Asp53 is an active-site residue. Mg(2+) is bound by residues Asp122 and Glu125. Residue Glu125 is part of the active site. In terms of domain architecture, DRBM spans 161 to 230 (DAKTELQEWA…AMKLLEREGV (70 aa)).

It belongs to the ribonuclease III family. In terms of assembly, homodimer. It depends on Mg(2+) as a cofactor.

It localises to the cytoplasm. The catalysed reaction is Endonucleolytic cleavage to 5'-phosphomonoester.. Digests double-stranded RNA. Involved in the processing of primary rRNA transcript to yield the immediate precursors to the large and small rRNAs (23S and 16S). Processes some mRNAs, and tRNAs when they are encoded in the rRNA operon. Processes pre-crRNA and tracrRNA of type II CRISPR loci if present in the organism. This is Ribonuclease 3 from Rhizobium meliloti (strain 1021) (Ensifer meliloti).